The following is a 132-amino-acid chain: DNA-directed RNA polymerase subunit omega (132 aa).

The segment at 76 to 105 (EVDEPEQDAASIAEGQLTSGSQDEDEMPET) is disordered.

It belongs to the RNA polymerase subunit omega family. As to quaternary structure, the RNAP catalytic core consists of 2 alpha, 1 beta, 1 beta' and 1 omega subunit. When a sigma factor is associated with the core the holoenzyme is formed, which can initiate transcription.

It catalyses the reaction RNA(n) + a ribonucleoside 5'-triphosphate = RNA(n+1) + diphosphate. Promotes RNA polymerase assembly. Latches the N- and C-terminal regions of the beta' subunit thereby facilitating its interaction with the beta and alpha subunits. The polypeptide is DNA-directed RNA polymerase subunit omega (Allorhizobium ampelinum (strain ATCC BAA-846 / DSM 112012 / S4) (Agrobacterium vitis (strain S4))).